Consider the following 191-residue polypeptide: Calcium-binding protein L (191 aa).

The N-myristoyl glycine moiety is linked to residue Gly2. EF-hand domains follow at residues 25–59, 60–95, and 96–131; these read EQVS…RFKD, YDDA…ITKS, and PVSD…ALNT. Residues Asp73, Asp75, Asn77, Arg79, and Glu84 each contribute to the Ca(2+) site.

This sequence belongs to the recoverin family.

This Dictyostelium discoideum (Social amoeba) protein is Calcium-binding protein L (cbpL).